The following is a 146-amino-acid chain: Large ribosomal subunit protein uL15 (146 aa).

The tract at residues Met1–Gln54 is disordered. Composition is skewed to gly residues over residues Arg21–Ala31 and Ser42–Gly52.

The protein belongs to the universal ribosomal protein uL15 family. In terms of assembly, part of the 50S ribosomal subunit.

Binds to the 23S rRNA. The polypeptide is Large ribosomal subunit protein uL15 (Clostridium botulinum (strain Alaska E43 / Type E3)).